A 153-amino-acid chain; its full sequence is Large ribosomal subunit protein uL13 (153 aa).

The interval 128–153 (SEHPHEAQSPEVLDVTSMNSKNTRSA) is disordered. Positions 143–153 (TSMNSKNTRSA) are enriched in polar residues.

The protein belongs to the universal ribosomal protein uL13 family. In terms of assembly, part of the 50S ribosomal subunit.

In terms of biological role, this protein is one of the early assembly proteins of the 50S ribosomal subunit, although it is not seen to bind rRNA by itself. It is important during the early stages of 50S assembly. The sequence is that of Large ribosomal subunit protein uL13 from Roseobacter denitrificans (strain ATCC 33942 / OCh 114) (Erythrobacter sp. (strain OCh 114)).